The sequence spans 324 residues: Palmitoyltransferase SWF1 (324 aa).

M1 is a topological domain (lumenal). Residues 2 to 22 form a helical membrane-spanning segment; that stretch reads FLLFLLFVVSQVGLLVFSPKF. Over 23–49 the chain is Cytoplasmic; sequence KDLILFRWYYQHIYYPLFTDYTRYRWK. The chain crosses the membrane as a helical span at residues 50-70; that stretch reads YWLVPGFYACILIFCVHLFYN. Over 71-84 the chain is Lumenal; that stretch reads KLNDTVNPYLYSLE. The chain crosses the membrane as a helical span at residues 85-105; that stretch reads KAFIPITIAFTSLTGVASVFV. Topologically, residues 106–173 are cytoplasmic; sequence KPLGLQAGPQ…VGYGNYEYFY (68 aa). Residues 127–177 enclose the DHHC domain; sequence AVCQTCKTIKVPRSKHCPICERCIPLHDHHCIWINNCVGYGNYEYFYSFLL. A helical transmembrane segment spans residues 174–194; sequence SFLLSNCLLLTYASLRLLTLF. Over 195-203 the chain is Lumenal; it reads RITAFKKDK. A helical membrane pass occupies residues 204-224; that stretch reads FFLSLFLLTTAFSLIAIVFTY. The Cytoplasmic portion of the chain corresponds to 225 to 324; the sequence is YQLKLVNDGM…NLKERIHLLD (100 aa).

Belongs to the DHHC palmitoyltransferase family. SWF1 subfamily.

It localises to the endoplasmic reticulum membrane. It carries out the reaction L-cysteinyl-[protein] + hexadecanoyl-CoA = S-hexadecanoyl-L-cysteinyl-[protein] + CoA. In terms of biological role, palmitoyltransferase that targets several endosomal SNAREs. Palmitoylates the SNAREs at cysteine residues close to the cytoplasmic end of their transmembrane domain. May have a role in the cellular quality control of transmembrane domain-containing proteins. This is Palmitoyltransferase SWF1 (SWF1) from Kluyveromyces lactis (strain ATCC 8585 / CBS 2359 / DSM 70799 / NBRC 1267 / NRRL Y-1140 / WM37) (Yeast).